The sequence spans 264 residues: Glutamate racemase (264 aa).

Residues 10 to 11 (DS) and 42 to 43 (YG) contribute to the substrate site. Cysteine 73 (proton donor/acceptor) is an active-site residue. Residue 74 to 75 (NT) coordinates substrate. The active-site Proton donor/acceptor is the cysteine 183. Residue 184-185 (TH) coordinates substrate.

This sequence belongs to the aspartate/glutamate racemases family.

It carries out the reaction L-glutamate = D-glutamate. Its pathway is cell wall biogenesis; peptidoglycan biosynthesis. Its function is as follows. Provides the (R)-glutamate required for cell wall biosynthesis. The chain is Glutamate racemase from Streptococcus sanguinis (strain SK36).